The primary structure comprises 192 residues: Anthrone oxygenase (192 aa).

Helical transmembrane passes span 12–32, 54–74, and 86–106; these read IVTG…TVPV, GHIS…YIAA, and AALV…VMSS. Asn130, Asn138, and Asn147 each carry an N-linked (GlcNAc...) asparagine glycan. The helical transmembrane segment at 172 to 192 threads the bilayer; it reads MHLVRSLFPLMAAVLGVGICV.

The protein belongs to the anthrone oxygenase family.

It localises to the membrane. The catalysed reaction is emodin anthrone + O2 = emodin + H2O + H(+). It functions in the pathway secondary metabolite biosynthesis. Anthrone oxygenase; part of the gene cluster that mediates the biosynthesis of monodictyphenone, a prenyl xanthone derivative. The pathway begins with the synthesis of atrochrysone thioester by the polyketide synthase (PKS) mdpG. The atrochrysone carboxyl ACP thioesterase mdpF then breaks the thioester bond and releases the atrochrysone carboxylic acid from mdpG. The atrochrysone carboxylic acid is then converted to atrochrysone which is further transformed into emodin anthrone by mdpH-1 and mdpH-2. Emodin is further modified to yield monodictyphenone via several steps involving mdpB, mdpC mdpJ, mdpK and mdpL. These enzymes with xptA, xptB and xptC are also proposed to be involved in the synthesis of shamixanthone from emodin. Especially, direct reduction of emodin by the short chain dehydrogenase mdpC followed by dehydration catalyzed by the scytalone dehydratase-like protein mdpB gives loss of oxygen and formation of chrysophanol intermediate in two simple steps. In Emericella nidulans (strain FGSC A4 / ATCC 38163 / CBS 112.46 / NRRL 194 / M139) (Aspergillus nidulans), this protein is Anthrone oxygenase.